The following is a 117-amino-acid chain: Transcription elongation factor A protein-like 8 (117 aa).

Positions 1-82 (MQKSCDENEG…EEVIRGVDEL (82 aa)) are disordered. Residues 41 to 82 (NVREETEGSHRGEPAEPSPEPKEDTPARHLNPEEVIRGVDEL) show a composition bias toward basic and acidic residues. Residues 73-100 (EEVIRGVDELERLREEIRRVRNKFVLMH) adopt a coiled-coil conformation.

It belongs to the TFS-II family. TFA subfamily.

It is found in the nucleus. May be involved in transcriptional regulation. This chain is Transcription elongation factor A protein-like 8 (Tceal8), found in Mus musculus (Mouse).